Reading from the N-terminus, the 165-residue chain is DNA mimic protein DMP19 (165 aa).

The protein belongs to the DMP19-like protein family. In terms of assembly, monomer. Homodimer. The monomeric form of DMP19 interacts with the DNA-binding protein HU homodimer with 1:1 stoichiometry. The dimeric form of DMP19 interacts with the Neisseria hypothetical transcription factor (NHTF) dimer.

With respect to regulation, activity can be modulated in vitro by crown ethers, which are small cyclic polyethers that can modify protein surface behavior dramatically by stabilizing either intra- or intermolecular interactions, thereby probably altering the protein's tertiary and quaternary structure. Functionally, acts as a DNA mimic. Interacts with DNA-binding proteins and prevents their binding to DNA by occupying the DNA binding sites on the proteins, acting as a competitive inhibitor. DMP19 is a bifunctional DNA mimic protein involved in controlling nucleoid formation as well as gene regulation. This bifunctionality depends on different oligomeric states. The monomeric form interacts with the DNA-binding protein HU, which prevents HU from binding to DNA and forming nucleoids. The dimeric form interacts with the Neisseria hypothetical transcription factor (NHTF) and prevents NHTF from binding to its DNA-binding sites, thereby blocking its repressor activity and influencing expression of the target genes. DMP19 might use these different oligomerizations to regulate genes in two steps: the monomeric form may first release selected gene regions in chromosomal DNA by preventing HU from binding to DNA and forming nucleoids, then the dimeric form blocks the gene repressor activity of NHTF and ensures the continued expression of NHTF-controlled genes. This Neisseria meningitidis serogroup B (strain ATCC BAA-335 / MC58) protein is DNA mimic protein DMP19.